The sequence spans 303 residues: MSTSHVALPTKAERHKLFGSVPPIKGTKPTEKEQMVDLQNTPKNFLFALDSVGISNVKHPVNVETPEGVQSTVATFELTTSLVQDRKGINMSRLTEQLDAYHQQGWTVSNRSLIEFAQELAERMEQTEGQLTIRYPWFFTRKAPATGLSGLMNADVMHRVTYNLETGVANVTVGLVINVTTLCPCSKEISEYSAHNQRGYITIEAGLDETSMDGFDWRAALLDAAESNASAPLHPVLKRPDEKRATEIAYENPRFVEDMVRLIAADLYEMKQVVNFFVECRNEESIHQHDAIASITFDKRQDA.

Belongs to the GTP cyclohydrolase IV family.

The enzyme catalyses GTP + H2O = 7,8-dihydroneopterin 3'-triphosphate + formate + H(+). It functions in the pathway cofactor biosynthesis; 7,8-dihydroneopterin triphosphate biosynthesis; 7,8-dihydroneopterin triphosphate from GTP: step 1/1. In terms of biological role, converts GTP to 7,8-dihydroneopterin triphosphate. This is GTP cyclohydrolase FolE2 from Exiguobacterium sp. (strain ATCC BAA-1283 / AT1b).